A 127-amino-acid chain; its full sequence is Anti-adapter protein IraD (127 aa).

It belongs to the GpW/Gp25 family. IraD subfamily. As to quaternary structure, interacts with RssB.

The protein localises to the cytoplasm. Inhibits RpoS proteolysis by regulating RssB activity, thereby increasing the stability of the sigma stress factor RpoS during oxidative stress. Its effect on RpoS stability is due to its interaction with RssB, which probably blocks the interaction of RssB with RpoS, and the consequent delivery of the RssB-RpoS complex to the ClpXP protein degradation pathway. This chain is Anti-adapter protein IraD, found in Escherichia coli O6:K15:H31 (strain 536 / UPEC).